The chain runs to 379 residues: Cytochrome b (379 aa).

4 consecutive transmembrane segments (helical) span residues Phe-33 to Met-53, Trp-77 to Val-98, Trp-113 to Leu-133, and Phe-178 to Leu-198. His-83 and His-97 together coordinate heme b. His-182 and His-196 together coordinate heme b. His-201 lines the a ubiquinone pocket. Transmembrane regions (helical) follow at residues Thr-226–Phe-246, Leu-288–Asn-308, Val-320–Gly-340, and Phe-347–Pro-367.

This sequence belongs to the cytochrome b family. The cytochrome bc1 complex contains 11 subunits: 3 respiratory subunits (MT-CYB, CYC1 and UQCRFS1), 2 core proteins (UQCRC1 and UQCRC2) and 6 low-molecular weight proteins (UQCRH/QCR6, UQCRB/QCR7, UQCRQ/QCR8, UQCR10/QCR9, UQCR11/QCR10 and a cleavage product of UQCRFS1). This cytochrome bc1 complex then forms a dimer. Heme b serves as cofactor.

Its subcellular location is the mitochondrion inner membrane. Functionally, component of the ubiquinol-cytochrome c reductase complex (complex III or cytochrome b-c1 complex) that is part of the mitochondrial respiratory chain. The b-c1 complex mediates electron transfer from ubiquinol to cytochrome c. Contributes to the generation of a proton gradient across the mitochondrial membrane that is then used for ATP synthesis. The protein is Cytochrome b (MT-CYB) of Akodon cursor (Cursor grass mouse).